The sequence spans 311 residues: Methionyl-tRNA formyltransferase (311 aa).

110-113 (SLLP) is a (6S)-5,6,7,8-tetrahydrofolate binding site.

Belongs to the Fmt family.

It carries out the reaction L-methionyl-tRNA(fMet) + (6R)-10-formyltetrahydrofolate = N-formyl-L-methionyl-tRNA(fMet) + (6S)-5,6,7,8-tetrahydrofolate + H(+). Attaches a formyl group to the free amino group of methionyl-tRNA(fMet). The formyl group appears to play a dual role in the initiator identity of N-formylmethionyl-tRNA by promoting its recognition by IF2 and preventing the misappropriation of this tRNA by the elongation apparatus. This Streptococcus pyogenes serotype M6 (strain ATCC BAA-946 / MGAS10394) protein is Methionyl-tRNA formyltransferase.